The following is a 378-amino-acid chain: Putative F-box protein At5g51000 (378 aa).

The F-box domain maps to 1–47 (MSTMSDLFPDLVEEILSRVPITSLKAVKLTCKQWNDLSKDSSFTKNH).

This is Putative F-box protein At5g51000 from Arabidopsis thaliana (Mouse-ear cress).